We begin with the raw amino-acid sequence, 261 residues long: Probable 6-phosphogluconolactonase 4 (261 aa).

The protein belongs to the glucosamine/galactosamine-6-phosphate isomerase family. 6-phosphogluconolactonase subfamily.

The protein resides in the cytoplasm. The protein localises to the cytosol. The enzyme catalyses 6-phospho-D-glucono-1,5-lactone + H2O = 6-phospho-D-gluconate + H(+). It functions in the pathway carbohydrate degradation; pentose phosphate pathway; D-ribulose 5-phosphate from D-glucose 6-phosphate (oxidative stage): step 2/3. In terms of biological role, catalyzes the hydrolysis of 6-phosphogluconolactone to 6-phosphogluconate. The chain is Probable 6-phosphogluconolactonase 4 from Arabidopsis thaliana (Mouse-ear cress).